The chain runs to 459 residues: tRNA modification GTPase MnmE (459 aa).

(6S)-5-formyl-5,6,7,8-tetrahydrofolate-binding residues include Arg-24, Glu-82, and Lys-122. A TrmE-type G domain is found at 219–379 (GIKVVISGAP…LRQHLYFSFK (161 aa)). Residues 229–234 (NSGKSS), 248–254 (TNFPGTT), and 273–276 (DTAG) each bind GTP. 2 residues coordinate Mg(2+): Ser-233 and Thr-254. Lys-459 is a (6S)-5-formyl-5,6,7,8-tetrahydrofolate binding site.

This sequence belongs to the TRAFAC class TrmE-Era-EngA-EngB-Septin-like GTPase superfamily. TrmE GTPase family. Homodimer. Heterotetramer of two MnmE and two MnmG subunits. K(+) serves as cofactor.

It is found in the cytoplasm. Exhibits a very high intrinsic GTPase hydrolysis rate. Involved in the addition of a carboxymethylaminomethyl (cmnm) group at the wobble position (U34) of certain tRNAs, forming tRNA-cmnm(5)s(2)U34. This chain is tRNA modification GTPase MnmE, found in Buchnera aphidicola subsp. Baizongia pistaciae (strain Bp).